A 603-amino-acid polypeptide reads, in one-letter code: Deuterosome assembly protein 1 (603 aa).

Coiled coils occupy residues 14 to 59 (CEAE…NAQT), 85 to 197 (MTQN…GKKQ), 227 to 278 (IEKL…ELQS), 336 to 399 (QDQP…KQLK), and 454 to 480 (HTSI…NGKS). Phosphoserine is present on serine 546. The stretch at 557–600 (AAQHFLLEEEKRAKELEKLLNTHIDELQRHTEFTLNKYSKLKQN) forms a coiled coil.

It belongs to the CEP63 family. In terms of assembly, interacts with CEP152; the interaction is mutually exclusive with CEP63.

Its subcellular location is the cytoplasm. Functionally, key structural component of the deuterosome, a structure that promotes de novo centriole amplification in multiciliated cells. Deuterosome-mediated centriole amplification occurs in terminally differentiated multiciliated cells and can generate more than 100 centrioles. Probably sufficient for the specification and formation of the deuterosome inner core. Interacts with CEP152 and recruits PLK4 to activate centriole biogenesis. The protein is Deuterosome assembly protein 1 of Macaca fascicularis (Crab-eating macaque).